A 352-amino-acid chain; its full sequence is Thiamine-phosphate synthase (352 aa).

Residues 1-128 (MNPTPSETSL…AAEAAAIRYG (128 aa)) are unknown. A disordered region spans residues 63 to 85 (SYKQARSTSTDTGAGLKHPAQLD). Residues 129 to 352 (LYDLEVTCLN…LLQQLDQATI (224 aa)) are thiamine-phosphate synthase. 4-amino-2-methyl-5-(diphosphooxymethyl)pyrimidine contacts are provided by residues 180–184 (QYRCK) and Asn-212. Mg(2+)-binding residues include Asp-213 and Asp-232. 4-amino-2-methyl-5-(diphosphooxymethyl)pyrimidine-binding residues include Ser-251 and Lys-280. Residue Gly-307 participates in 2-[(2R,5Z)-2-carboxy-4-methylthiazol-5(2H)-ylidene]ethyl phosphate binding.

It belongs to the thiamine-phosphate synthase family. Requires Mg(2+) as cofactor.

The catalysed reaction is 2-[(2R,5Z)-2-carboxy-4-methylthiazol-5(2H)-ylidene]ethyl phosphate + 4-amino-2-methyl-5-(diphosphooxymethyl)pyrimidine + 2 H(+) = thiamine phosphate + CO2 + diphosphate. The enzyme catalyses 2-(2-carboxy-4-methylthiazol-5-yl)ethyl phosphate + 4-amino-2-methyl-5-(diphosphooxymethyl)pyrimidine + 2 H(+) = thiamine phosphate + CO2 + diphosphate. It carries out the reaction 4-methyl-5-(2-phosphooxyethyl)-thiazole + 4-amino-2-methyl-5-(diphosphooxymethyl)pyrimidine + H(+) = thiamine phosphate + diphosphate. It participates in cofactor biosynthesis; thiamine diphosphate biosynthesis; thiamine phosphate from 4-amino-2-methyl-5-diphosphomethylpyrimidine and 4-methyl-5-(2-phosphoethyl)-thiazole: step 1/1. Condenses 4-methyl-5-(beta-hydroxyethyl)thiazole monophosphate (THZ-P) and 2-methyl-4-amino-5-hydroxymethyl pyrimidine pyrophosphate (HMP-PP) to form thiamine monophosphate (TMP). The chain is Thiamine-phosphate synthase from Synechococcus sp. (strain CC9605).